Consider the following 322-residue polypeptide: Putative HTH-type transcriptional regulatory protein rrnAC2519 (322 aa).

One can recognise an HTH cro/C1-type domain in the interval 132–189; sequence LADVREDRDWSLGRLAKELGVSRRTVSKYEDGMDASVEVAAELEDLFDAPLTSPVSVL. Residues 143-162 constitute a DNA-binding region (H-T-H motif); it reads LGRLAKELGVSRRTVSKYED.

The protein is Putative HTH-type transcriptional regulatory protein rrnAC2519 of Haloarcula marismortui (strain ATCC 43049 / DSM 3752 / JCM 8966 / VKM B-1809) (Halobacterium marismortui).